Here is a 165-residue protein sequence, read N- to C-terminus: Crossover junction endodeoxyribonuclease RuvC (165 aa).

Residues D7, E67, and D140 contribute to the active site. Positions 7, 67, and 140 each coordinate Mg(2+).

Belongs to the RuvC family. Homodimer which binds Holliday junction (HJ) DNA. The HJ becomes 2-fold symmetrical on binding to RuvC with unstacked arms; it has a different conformation from HJ DNA in complex with RuvA. In the full resolvosome a probable DNA-RuvA(4)-RuvB(12)-RuvC(2) complex forms which resolves the HJ. The cofactor is Mg(2+).

It localises to the cytoplasm. The catalysed reaction is Endonucleolytic cleavage at a junction such as a reciprocal single-stranded crossover between two homologous DNA duplexes (Holliday junction).. In terms of biological role, the RuvA-RuvB-RuvC complex processes Holliday junction (HJ) DNA during genetic recombination and DNA repair. Endonuclease that resolves HJ intermediates. Cleaves cruciform DNA by making single-stranded nicks across the HJ at symmetrical positions within the homologous arms, yielding a 5'-phosphate and a 3'-hydroxyl group; requires a central core of homology in the junction. The consensus cleavage sequence is 5'-(A/T)TT(C/G)-3'. Cleavage occurs on the 3'-side of the TT dinucleotide at the point of strand exchange. HJ branch migration catalyzed by RuvA-RuvB allows RuvC to scan DNA until it finds its consensus sequence, where it cleaves and resolves the cruciform DNA. In Thermotoga petrophila (strain ATCC BAA-488 / DSM 13995 / JCM 10881 / RKU-1), this protein is Crossover junction endodeoxyribonuclease RuvC.